Here is a 300-residue protein sequence, read N- to C-terminus: Delta-9 desaturase-like 4 protein (300 aa).

2 helical membrane-spanning segments follow: residues 39–59 (VVVIVHFLCLLAPFNFKWEAL) and 61–81 (FGLVLFALTTLSITFSFHRNL). Positions 78 to 83 (HRNLSH) match the Histidine box-1 motif. Residues 115 to 119 (HRFHH) carry the Histidine box-2 motif. Helical transmembrane passes span 175-195 (IAVHILMFWTILYLYGGLPYL) and 200-220 (GVGIFIGYHVTWLVNSACHIW). Positions 247-251 (HNNHH) match the Histidine box-3 motif.

Belongs to the fatty acid desaturase type 1 family. The cofactor is Fe cation.

The protein resides in the endoplasmic reticulum membrane. Its pathway is lipid metabolism; polyunsaturated fatty acid biosynthesis. This is Delta-9 desaturase-like 4 protein from Arabidopsis thaliana (Mouse-ear cress).